We begin with the raw amino-acid sequence, 374 residues long: Pectate lyase 3 (374 aa).

Residues 1-22 (MKYLLPSAAAGLLLLAAQPTMA) form the signal peptide. A disulfide bridge connects residues Cys-93 and Cys-176. Residues Asp-150, Asp-152, Glu-187, and Asp-191 each coordinate Ca(2+). Residue Arg-239 is part of the active site. A disulfide bond links Cys-350 and Cys-373.

This sequence belongs to the polysaccharide lyase 1 family. PLADES subfamily. Requires Ca(2+) as cofactor.

The protein localises to the secreted. It carries out the reaction Eliminative cleavage of (1-&gt;4)-alpha-D-galacturonan to give oligosaccharides with 4-deoxy-alpha-D-galact-4-enuronosyl groups at their non-reducing ends.. The protein operates within glycan metabolism; pectin degradation; 2-dehydro-3-deoxy-D-gluconate from pectin: step 2/5. Its function is as follows. Involved in maceration and soft-rotting of plant tissue. This chain is Pectate lyase 3 (pel3), found in Pectobacterium carotovorum subsp. carotovorum (Erwinia carotovora subsp. carotovora).